Here is a 60-residue protein sequence, read N- to C-terminus: Bacteriochlorophyll c-binding protein (60 aa).

Met-1 bears the N-formylmethionine mark. Residue His-25 participates in a bacteriochlorophyll c binding.

This sequence belongs to the BChl C/E-binding protein family.

Its subcellular location is the chlorosome. It is found in the chlorosome envelope. Component of the photosynthetic apparatus. The light harvesting B740 complex binds bacteriochlorophyll c. This chain is Bacteriochlorophyll c-binding protein (csmA), found in Pelodictyon luteolum.